Here is a 382-residue protein sequence, read N- to C-terminus: Sphingoid long-chain base transporter RSB1 (382 aa).

Over 1–34 the chain is Extracellular; the sequence is MSNATNNTLGSLLPQLEAAANSNSLYGGMVPNLR. 2 N-linked (GlcNAc...) asparagine glycosylation sites follow: N3 and N6. The chain crosses the membrane as a helical span at residues 35–55; that stretch reads FNITMIVIWGILLTIHVVQLL. Over 56–57 the chain is Cytoplasmic; sequence MR. Residues 58–78 form a helical membrane-spanning segment; sequence QYWFSIAFICTGILEVLGFIG. The Extracellular portion of the chain corresponds to 79–90; the sequence is RTWSHSNVADMD. Residues 91–111 form a helical membrane-spanning segment; it reads AFLLNMICLTIAPVFTMGGIY. At 112–135 the chain is on the cytoplasmic side; it reads YQLAKLIEVYGHRFSLLPSPMAYS. Residues 136–156 form a helical membrane-spanning segment; that stretch reads FIFICSDIVSLVVQAVGGGLC. Over 157-171 the chain is Extracellular; the sequence is GVAVTDGTSTTTGNH. The helical transmembrane segment at 172–192 threads the bilayer; the sequence is VFIAGLAIQVASMAIFLMLWF. Residues 193 to 241 are Cytoplasmic-facing; sequence HFLFRIYISVRWEHINSRPISLSLLKISQTEVDYLYREKFHFLRLEPKR. A helical transmembrane segment spans residues 242–262; it reads WVFHYFNLAITVAVLTIFTRC. Over 263–281 the chain is Extracellular; the sequence is CYRLAELVVGWDGYLITHE. Residues 282 to 302 form a helical membrane-spanning segment; it reads WYFIILDALMMAIATVTLTIF. Residues 303-382 lie on the Cytoplasmic side of the membrane; the sequence is HPGFAFKGRS…LFSSKKKAKL (80 aa).

Belongs to the lipid-translocating exporter (LTE) (TC 9.A.26.1) family.

It is found in the cell membrane. Functionally, catalyzes the ATP-dependent translocation of sphingoid long-chain bases (LCBs) from the cytoplasmic site toward the extracytoplasmic side of the membrane (flip-flop). Involved in the establishment of the functional lipid asymmetry of the plasma membrane. Regulates intracellular levels of LCBs, sphingolipid precursors that are growth inhibitory at increased levels. In Saccharomyces cerevisiae (strain ATCC 204508 / S288c) (Baker's yeast), this protein is Sphingoid long-chain base transporter RSB1 (RSB1).